The chain runs to 549 residues: Glucose-6-phosphate isomerase (549 aa).

The active-site Proton donor is the glutamate 353. Active-site residues include histidine 384 and lysine 513.

It belongs to the GPI family.

Its subcellular location is the cytoplasm. It carries out the reaction alpha-D-glucose 6-phosphate = beta-D-fructose 6-phosphate. The protein operates within carbohydrate biosynthesis; gluconeogenesis. It functions in the pathway carbohydrate degradation; glycolysis; D-glyceraldehyde 3-phosphate and glycerone phosphate from D-glucose: step 2/4. Catalyzes the reversible isomerization of glucose-6-phosphate to fructose-6-phosphate. The chain is Glucose-6-phosphate isomerase from Brucella suis (strain ATCC 23445 / NCTC 10510).